Here is a 236-residue protein sequence, read N- to C-terminus: Ribonuclease 3 (236 aa).

Positions 7–136 (KSYILKKFNI…FIGALYLDQG (130 aa)) constitute an RNase III domain. Glu49 provides a ligand contact to Mg(2+). Asp53 is a catalytic residue. Positions 122 and 125 each coordinate Mg(2+). Glu125 is an active-site residue. One can recognise a DRBM domain in the interval 162 to 232 (DFKSRLQERL…ARAALKILED (71 aa)).

Belongs to the ribonuclease III family. In terms of assembly, homodimer. Mg(2+) serves as cofactor.

Its subcellular location is the cytoplasm. The enzyme catalyses Endonucleolytic cleavage to 5'-phosphomonoester.. Functionally, digests double-stranded RNA. Involved in the processing of primary rRNA transcript to yield the immediate precursors to the large and small rRNAs (23S and 16S). Processes some mRNAs, and tRNAs when they are encoded in the rRNA operon. Processes pre-crRNA and tracrRNA of type II CRISPR loci if present in the organism. This Leuconostoc mesenteroides subsp. mesenteroides (strain ATCC 8293 / DSM 20343 / BCRC 11652 / CCM 1803 / JCM 6124 / NCDO 523 / NBRC 100496 / NCIMB 8023 / NCTC 12954 / NRRL B-1118 / 37Y) protein is Ribonuclease 3.